Reading from the N-terminus, the 167-residue chain is Lipoprotein signal peptidase (167 aa).

4 helical membrane passes run 8–28 (TFLT…VVLL), 46–66 (WGHF…FGLF), 70–90 (KIPL…FLGI), and 101–121 (IALT…LFHG). Residues D125 and D143 contribute to the active site. The chain crosses the membrane as a helical span at residues 139–159 (FNLADAFISLGTLLLVGHLYF).

Belongs to the peptidase A8 family.

The protein resides in the cell inner membrane. The catalysed reaction is Release of signal peptides from bacterial membrane prolipoproteins. Hydrolyzes -Xaa-Yaa-Zaa-|-(S,diacylglyceryl)Cys-, in which Xaa is hydrophobic (preferably Leu), and Yaa (Ala or Ser) and Zaa (Gly or Ala) have small, neutral side chains.. It functions in the pathway protein modification; lipoprotein biosynthesis (signal peptide cleavage). Its function is as follows. This protein specifically catalyzes the removal of signal peptides from prolipoproteins. This Chlamydia muridarum (strain MoPn / Nigg) protein is Lipoprotein signal peptidase.